Here is a 350-residue protein sequence, read N- to C-terminus: S-adenosylmethionine:tRNA ribosyltransferase-isomerase (350 aa).

Belongs to the QueA family. Monomer.

The protein localises to the cytoplasm. The enzyme catalyses 7-aminomethyl-7-carbaguanosine(34) in tRNA + S-adenosyl-L-methionine = epoxyqueuosine(34) in tRNA + adenine + L-methionine + 2 H(+). It participates in tRNA modification; tRNA-queuosine biosynthesis. Transfers and isomerizes the ribose moiety from AdoMet to the 7-aminomethyl group of 7-deazaguanine (preQ1-tRNA) to give epoxyqueuosine (oQ-tRNA). In Bacillus cytotoxicus (strain DSM 22905 / CIP 110041 / 391-98 / NVH 391-98), this protein is S-adenosylmethionine:tRNA ribosyltransferase-isomerase.